A 106-amino-acid polypeptide reads, in one-letter code: Immunoglobulin lambda constant 7 (106 aa).

The 95-residue stretch at 7–101 (PSVTLFPPSS…EGSTVEKTVA (95 aa)) folds into the Ig-like domain. C28 and C87 are oxidised to a cystine.

In terms of assembly, immunoglobulins are composed of two identical heavy chains and two identical light chains; disulfide-linked.

The protein localises to the secreted. Its subcellular location is the cell membrane. Functionally, constant region of immunoglobulin light chains. Immunoglobulins, also known as antibodies, are membrane-bound or secreted glycoproteins produced by B lymphocytes. In the recognition phase of humoral immunity, the membrane-bound immunoglobulins serve as receptors which, upon binding of a specific antigen, trigger the clonal expansion and differentiation of B lymphocytes into immunoglobulins-secreting plasma cells. Secreted immunoglobulins mediate the effector phase of humoral immunity, which results in the elimination of bound antigens. The antigen binding site is formed by the variable domain of one heavy chain, together with that of its associated light chain. Thus, each immunoglobulin has two antigen binding sites with remarkable affinity for a particular antigen. The variable domains are assembled by a process called V-(D)-J rearrangement and can then be subjected to somatic hypermutations which, after exposure to antigen and selection, allow affinity maturation for a particular antigen. The polypeptide is Immunoglobulin lambda constant 7 (Homo sapiens (Human)).